The following is a 463-amino-acid chain: Senescence/dehydration-associated protein At3g51250 (463 aa).

The segment covering 1–12 has biased composition (basic and acidic residues); it reads MNPSHGGDDKQR. 3 disordered regions span residues 1–31, 52–74, and 146–172; these read MNPS…FAST, PNLF…PQAT, and IHPP…KSKS. Over residues 19-31 the composition is skewed to polar residues; the sequence is VDQSIPDNPFAST. In terms of domain architecture, Senescence spans 269–437; that stretch reads IASGSGKLIR…AWVAFKIRKA (169 aa).

This chain is Senescence/dehydration-associated protein At3g51250, found in Arabidopsis thaliana (Mouse-ear cress).